A 34-amino-acid polypeptide reads, in one-letter code: Photosystem II reaction center protein M (34 aa).

Residues 5-25 (ILAFSATALLILFPTALLLIL) form a helical membrane-spanning segment.

This sequence belongs to the PsbM family. PSII is composed of 1 copy each of membrane proteins PsbA, PsbB, PsbC, PsbD, PsbE, PsbF, PsbH, PsbI, PsbJ, PsbK, PsbL, PsbM, PsbT, PsbX, PsbY, PsbZ, Psb30/Ycf12, at least 3 peripheral proteins of the oxygen-evolving complex and a large number of cofactors. It forms dimeric complexes.

It localises to the plastid membrane. One of the components of the core complex of photosystem II (PSII). PSII is a light-driven water:plastoquinone oxidoreductase that uses light energy to abstract electrons from H(2)O, generating O(2) and a proton gradient subsequently used for ATP formation. It consists of a core antenna complex that captures photons, and an electron transfer chain that converts photonic excitation into a charge separation. This subunit is found at the monomer-monomer interface. This chain is Photosystem II reaction center protein M, found in Cuscuta gronovii (Common dodder).